A 227-amino-acid polypeptide reads, in one-letter code: 7-cyano-7-deazaguanine synthase (227 aa).

8 to 18 (FSGGQDSTTCL) is a binding site for ATP. Residues C187, C196, C199, and C202 each contribute to the Zn(2+) site.

This sequence belongs to the QueC family. It depends on Zn(2+) as a cofactor.

It catalyses the reaction 7-carboxy-7-deazaguanine + NH4(+) + ATP = 7-cyano-7-deazaguanine + ADP + phosphate + H2O + H(+). It participates in purine metabolism; 7-cyano-7-deazaguanine biosynthesis. Catalyzes the ATP-dependent conversion of 7-carboxy-7-deazaguanine (CDG) to 7-cyano-7-deazaguanine (preQ(0)). In Aliivibrio salmonicida (strain LFI1238) (Vibrio salmonicida (strain LFI1238)), this protein is 7-cyano-7-deazaguanine synthase.